Consider the following 522-residue polypeptide: Sensory neuron membrane protein 1 (522 aa).

Residues 1-11 (MKLPKHLKFAA) lie on the Cytoplasmic side of the membrane. Residues 12–32 (GAGGAFLFGILFGWVMFPAIL) traverse the membrane as a helical segment. At 33–455 (KGQLKKEMAL…KFQLFYPKKA (423 aa)) the chain is on the extracellular side. 2 N-linked (GlcNAc...) asparagine glycosylation sites follow: N67 and N229. 3 cysteine pairs are disulfide-bonded: C268–C333, C297–C350, and C335–C339. An N-linked (GlcNAc...) asparagine glycan is attached at N438. Residues 456–476 (VGVIKWLLVTFGGFGLIGCTI) form a helical membrane-spanning segment. Residues 477 to 522 (YHYKDRIMSFASSPGSAAVTKVKPEEVEQKDVSVIGQPQEPAKINM) are Cytoplasmic-facing.

It belongs to the CD36 family.

The protein localises to the cell membrane. In terms of biological role, plays an olfactory role that is not restricted to pheromone sensitivity. The chain is Sensory neuron membrane protein 1 from Plutella xylostella (Diamondback moth).